We begin with the raw amino-acid sequence, 200 residues long: Large ribosomal subunit protein uL4 (200 aa).

Residues 38-68 form a disordered region; sequence GRQGSKQQKTRSDVRGGGKRPWRQKGTGRAR. The span at 54-65 shows a compositional bias: basic residues; the sequence is GGKRPWRQKGTG.

It belongs to the universal ribosomal protein uL4 family. Part of the 50S ribosomal subunit.

One of the primary rRNA binding proteins, this protein initially binds near the 5'-end of the 23S rRNA. It is important during the early stages of 50S assembly. It makes multiple contacts with different domains of the 23S rRNA in the assembled 50S subunit and ribosome. Its function is as follows. Forms part of the polypeptide exit tunnel. The protein is Large ribosomal subunit protein uL4 of Pseudomonas fluorescens (strain SBW25).